Reading from the N-terminus, the 78-residue chain is Defensin-like protein 90 (78 aa).

A signal peptide spans 1 to 25 (MTTKMFSYVLLHSLMMFAIILSSMG). Disulfide bonds link cysteine 33–cysteine 70, cysteine 38–cysteine 59, cysteine 44–cysteine 68, and cysteine 48–cysteine 69.

This sequence belongs to the DEFL family.

It localises to the secreted. The sequence is that of Defensin-like protein 90 from Arabidopsis thaliana (Mouse-ear cress).